We begin with the raw amino-acid sequence, 148 residues long: 1,4-dihydroxy-2-naphthoyl-CoA hydrolase (148 aa).

Residue D15 is part of the active site.

This sequence belongs to the 4-hydroxybenzoyl-CoA thioesterase family. DHNA-CoA hydrolase subfamily.

It catalyses the reaction 1,4-dihydroxy-2-naphthoyl-CoA + H2O = 1,4-dihydroxy-2-naphthoate + CoA + H(+). The protein operates within cofactor biosynthesis; phylloquinone biosynthesis. It participates in quinol/quinone metabolism; 1,4-dihydroxy-2-naphthoate biosynthesis; 1,4-dihydroxy-2-naphthoate from chorismate: step 7/7. In terms of biological role, catalyzes the hydrolysis of 1,4-dihydroxy-2-naphthoyl-CoA (DHNA-CoA) to 1,4-dihydroxy-2-naphthoate (DHNA), a reaction involved in phylloquinone (vitamin K1) biosynthesis. This Nostoc sp. (strain PCC 7120 / SAG 25.82 / UTEX 2576) protein is 1,4-dihydroxy-2-naphthoyl-CoA hydrolase.